Consider the following 240-residue polypeptide: Small ribosomal subunit protein uS3 (240 aa).

In terms of domain architecture, KH type-2 spans 21–92; that stretch reads LNEFFTRELA…TIVLYAERVQ (72 aa). 2 positions are modified to phosphothreonine: threonine 44 and threonine 70. A Phosphoserine modification is found at serine 97. Lysine 106 participates in a covalent cross-link: Glycyl lysine isopeptide (Lys-Gly) (interchain with G-Cter in ubiquitin). Phosphoserine is present on serine 129. Glycyl lysine isopeptide (Lys-Gly) (interchain with G-Cter in ubiquitin) cross-links involve residues lysine 132 and lysine 141. An Omega-N-methylarginine; by SFM1 modification is found at arginine 146. Glycyl lysine isopeptide (Lys-Gly) (interchain with G-Cter in ubiquitin) cross-links involve residues lysine 151, lysine 200, and lysine 212. A disordered region spans residues 212–240; sequence KEEEPILAPSVKDYRPAEETEAQAEPVEA. Serine 221 carries the post-translational modification Phosphoserine. A compositionally biased stretch (acidic residues) spans 230-240; it reads ETEAQAEPVEA. Position 231 is a phosphothreonine (threonine 231).

Belongs to the universal ribosomal protein uS3 family. In terms of assembly, component of the small ribosomal subunit (SSU). Mature yeast ribosomes consist of a small (40S) and a large (60S) subunit. The 40S small subunit contains 1 molecule of ribosomal RNA (18S rRNA) and 33 different proteins (encoded by 57 genes). The large 60S subunit contains 3 rRNA molecules (25S, 5.8S and 5S rRNA) and 46 different proteins (encoded by 81 genes). In terms of processing, ubiquitinated at Lys-212 in response to stalled ribosomes. Ubiquitination leads to activation of the No-Go Decay (NGD) pathway and degradation of non-functional 18S rRNA: first monoubiquitinated at Lys-212 by MAG2, followed by formation of 'Lys-63'-linked polyubiquitin chains on monoubiquitin by HEL2 and RSP5.

The protein resides in the cytoplasm. Component of the ribosome, a large ribonucleoprotein complex responsible for the synthesis of proteins in the cell. The small ribosomal subunit (SSU) binds messenger RNAs (mRNAs) and translates the encoded message by selecting cognate aminoacyl-transfer RNA (tRNA) molecules. The large subunit (LSU) contains the ribosomal catalytic site termed the peptidyl transferase center (PTC), which catalyzes the formation of peptide bonds, thereby polymerizing the amino acids delivered by tRNAs into a polypeptide chain. The nascent polypeptides leave the ribosome through a tunnel in the LSU and interact with protein factors that function in enzymatic processing, targeting, and the membrane insertion of nascent chains at the exit of the ribosomal tunnel. The protein is Small ribosomal subunit protein uS3 of Saccharomyces cerevisiae (strain ATCC 204508 / S288c) (Baker's yeast).